Reading from the N-terminus, the 118-residue chain is Large ribosomal subunit protein bL19 (118 aa).

It belongs to the bacterial ribosomal protein bL19 family.

Functionally, this protein is located at the 30S-50S ribosomal subunit interface and may play a role in the structure and function of the aminoacyl-tRNA binding site. The sequence is that of Large ribosomal subunit protein bL19 from Aliarcobacter butzleri (strain RM4018) (Arcobacter butzleri).